The sequence spans 512 residues: Cytochrome P450 monooxygenase gliC (512 aa).

Residues 1–19 (MAFTLTILVPCMVLALVAA) form the signal peptide. N-linked (GlcNAc...) asparagine glycosylation is found at Asn118, Asn421, and Asn434. Residue Cys452 participates in heme binding.

Belongs to the cytochrome P450 family. Heme serves as cofactor.

The protein operates within mycotoxin biosynthesis. Cytochrome P450 monooxygenase; part of the gene cluster that mediates the biosynthesis of gliotoxin, a member of the epipolythiodioxopiperazine (ETP) class of toxins characterized by a disulfide bridged cyclic dipeptide. The first step in gliotoxin biosynthesis is the condensation of serine and phenylalanine to form the cyclo-L-phenylalanyl-L-serine diketopiperazine (DKP) by the NRPS gliP. GliP is also able to produce the DKP cyclo-L-tryptophanyl-L-serine, suggesting that the substrate specificity of the first adenylation (A) domain in gliP is sufficiently relaxed to accommodate both L-Phe and L-Trp. The cytochrome P450 monooxygenase gliC has been shown to catalyze the subsequent hydroxylation of the alpha-carbon of L-Phe in cyclo-L-phenylalanyl-L-serine whereas the second cytochrome P450 enzyme, gliF, is presumably involved in the modification of the DKP side chain. The glutathione S-transferase (GST) gliG then forms a bis-glutathionylated biosynthetic intermediate which is responsible for the sulfurization of gliotoxin. This bis-glutathionylated intermediate is subsequently processed by the gamma-glutamyl cyclotransferase gliK to remove both gamma-glutamyl moieties. Subsequent processing via gliI yields a biosynthetic intermediate, which is N-methylated via the N-methyltransferase gliN, before the gliotoxin oxidoreductase gliT-mediated disulfide bridge closure. GliN-mediated amide methylation confers stability to ETP, damping the spontaneous formation of tri- and tetrasulfides. Intracellular dithiol gliotoxin oxidized by gliT is subsequently effluxed by gliA. Gliotoxin contributes to pathogenesis during invasive aspergillosis. In macrophages and neutrophils, gliotoxin showed inhibition of various different cell functions including cytokine production, antigen presentation, phagocytosis, and production of reactive oxygen species. This is Cytochrome P450 monooxygenase gliC from Aspergillus fumigatus (strain ATCC MYA-4609 / CBS 101355 / FGSC A1100 / Af293) (Neosartorya fumigata).